The following is a 339-amino-acid chain: MDHLPQLVAEARAAIESAEDVQSLDEVRVRYLGKKGEITALLKGLGKLPAEERPKAGEQINDAKQVLSDELEARKKHLQDAELNARLAQERIDVTLPGRGEPTGGLHPVTRTLERIESLFAHIGFDVAVGPELEDDYHNFEALNIPAHHPARGMADTFYFDASRLLRTHTSPVQVRTMKEQAPPIRIVCPGRVYRSDSDLTHTPMFHQVEGLLVDEDVSFADLKGTIEDFLKAFFERESLSVRFRPSYFPFTEPSAEVDIQCVMCGGDGCRVCSHSGWLEVMGCGMVHPEVFRHSGIDAERYTGFAFGMGAERLTMLRYGVNDLRLFFENDLRFLRQFG.

A Mg(2+)-binding site is contributed by E253.

It belongs to the class-II aminoacyl-tRNA synthetase family. Phe-tRNA synthetase alpha subunit type 1 subfamily. In terms of assembly, tetramer of two alpha and two beta subunits. Requires Mg(2+) as cofactor.

The protein localises to the cytoplasm. It carries out the reaction tRNA(Phe) + L-phenylalanine + ATP = L-phenylalanyl-tRNA(Phe) + AMP + diphosphate + H(+). This chain is Phenylalanine--tRNA ligase alpha subunit, found in Chromohalobacter salexigens (strain ATCC BAA-138 / DSM 3043 / CIP 106854 / NCIMB 13768 / 1H11).